We begin with the raw amino-acid sequence, 86 residues long: Synergistic-like venom protein (86 aa).

The first 21 residues, 1-21, serve as a signal peptide directing secretion; that stretch reads MKTLLLTLVVVTIVCLDLGYT. 4 disulfide bridges follow: C24–C45, C38–C63, C67–C78, and C79–C84.

The protein belongs to the three-finger toxin family. Short-chain subfamily. Aminergic toxin sub-subfamily. Expressed by the venom gland.

The protein resides in the secreted. This chain is Synergistic-like venom protein, found in Dendroaspis angusticeps (Eastern green mamba).